The sequence spans 852 residues: Replication factor C small subunit (852 aa).

The DOD-type homing endonuclease domain occupies 183–306 (WLGYFMGSGY…IAYALASFGI (124 aa)).

The protein belongs to the activator 1 small subunits family. RfcS subfamily. In terms of assembly, heteromultimer composed of three to four small subunits (RfcS) and one to two large subunits (RfcL). In terms of processing, this protein undergoes a protein self splicing that involves a post-translational excision of the intervening region (intein) followed by peptide ligation.

Part of the RFC clamp loader complex which loads the PCNA sliding clamp onto DNA. The complex possesses DNA-dependent ATPase activity which is further stimulated by PCNA. In Pyrococcus furiosus (strain ATCC 43587 / DSM 3638 / JCM 8422 / Vc1), this protein is Replication factor C small subunit (rfcS).